We begin with the raw amino-acid sequence, 260 residues long: Ribonuclease PH (260 aa).

Residues R88 and 126–128 (GTR) each bind phosphate.

Belongs to the RNase PH family. In terms of assembly, homohexameric ring arranged as a trimer of dimers.

The enzyme catalyses tRNA(n+1) + phosphate = tRNA(n) + a ribonucleoside 5'-diphosphate. Its function is as follows. Phosphorolytic 3'-5' exoribonuclease that plays an important role in tRNA 3'-end maturation. Removes nucleotide residues following the 3'-CCA terminus of tRNAs; can also add nucleotides to the ends of RNA molecules by using nucleoside diphosphates as substrates, but this may not be physiologically important. Probably plays a role in initiation of 16S rRNA degradation (leading to ribosome degradation) during starvation. The sequence is that of Ribonuclease PH from Mycolicibacterium gilvum (strain PYR-GCK) (Mycobacterium gilvum (strain PYR-GCK)).